Here is a 443-residue protein sequence, read N- to C-terminus: Probable glycine dehydrogenase (decarboxylating) subunit 1 (443 aa).

Belongs to the GcvP family. N-terminal subunit subfamily. The glycine cleavage system is composed of four proteins: P, T, L and H. In this organism, the P 'protein' is a heterodimer of two subunits.

It catalyses the reaction N(6)-[(R)-lipoyl]-L-lysyl-[glycine-cleavage complex H protein] + glycine + H(+) = N(6)-[(R)-S(8)-aminomethyldihydrolipoyl]-L-lysyl-[glycine-cleavage complex H protein] + CO2. Its function is as follows. The glycine cleavage system catalyzes the degradation of glycine. The P protein binds the alpha-amino group of glycine through its pyridoxal phosphate cofactor; CO(2) is released and the remaining methylamine moiety is then transferred to the lipoamide cofactor of the H protein. In Desulfovibrio desulfuricans (strain ATCC 27774 / DSM 6949 / MB), this protein is Probable glycine dehydrogenase (decarboxylating) subunit 1.